Here is a 503-residue protein sequence, read N- to C-terminus: Probable protein kinase UbiB (503 aa).

Residues 13 to 35 (TFYRYRLAGLCASLMGSGWICAL) traverse the membrane as a helical segment. One can recognise a Protein kinase domain in the interval 120–491 (EFETEPIASA…QQRQSLWLAV (372 aa)). ATP-binding positions include 126-134 (IASASIAQV) and K148. D283 acts as the Proton acceptor in catalysis. The helical transmembrane segment at 485 to 502 (QSLWLAVIAVVLLLILLL) threads the bilayer.

Belongs to the ABC1 family. UbiB subfamily.

The protein localises to the cell inner membrane. Its pathway is cofactor biosynthesis; ubiquinone biosynthesis [regulation]. Its function is as follows. Is probably a protein kinase regulator of UbiI activity which is involved in aerobic coenzyme Q (ubiquinone) biosynthesis. This is Probable protein kinase UbiB from Neisseria meningitidis serogroup B (strain ATCC BAA-335 / MC58).